A 338-amino-acid polypeptide reads, in one-letter code: Biotin synthase (338 aa).

The Radical SAM core domain occupies 45–272 (DEVQMSTLLS…QSVVRLSAGR (228 aa)). [4Fe-4S] cluster contacts are provided by Cys-60, Cys-64, and Cys-67. [2Fe-2S] cluster-binding residues include Cys-104, Cys-135, Cys-195, and Arg-267.

It belongs to the radical SAM superfamily. Biotin synthase family. In terms of assembly, homodimer. [4Fe-4S] cluster serves as cofactor. [2Fe-2S] cluster is required as a cofactor.

The enzyme catalyses (4R,5S)-dethiobiotin + (sulfur carrier)-SH + 2 reduced [2Fe-2S]-[ferredoxin] + 2 S-adenosyl-L-methionine = (sulfur carrier)-H + biotin + 2 5'-deoxyadenosine + 2 L-methionine + 2 oxidized [2Fe-2S]-[ferredoxin]. It participates in cofactor biosynthesis; biotin biosynthesis; biotin from 7,8-diaminononanoate: step 2/2. Functionally, catalyzes the conversion of dethiobiotin (DTB) to biotin by the insertion of a sulfur atom into dethiobiotin via a radical-based mechanism. The sequence is that of Biotin synthase from Parvibaculum lavamentivorans (strain DS-1 / DSM 13023 / NCIMB 13966).